A 145-amino-acid chain; its full sequence is uncharacterized protein (145 aa).

In terms of domain architecture, ACT spans K78–W145.

This is an uncharacterized protein from Methanocaldococcus jannaschii (strain ATCC 43067 / DSM 2661 / JAL-1 / JCM 10045 / NBRC 100440) (Methanococcus jannaschii).